Consider the following 160-residue polypeptide: CXXC motif containing zinc binding protein (160 aa).

Residues Cys-33, Cys-36, Cys-67, and Cys-70 each contribute to the Zn(2+) site.

It belongs to the UPF0587 family.

The chain is CXXC motif containing zinc binding protein (czib) from Xenopus laevis (African clawed frog).